The chain runs to 462 residues: Adenylosuccinate lyase (462 aa).

Residues 21–22, 87–89, and 114–115 each bind N(6)-(1,2-dicarboxyethyl)-AMP; these read RY, KHD, and TS. H162 serves as the catalytic Proton donor/acceptor. N(6)-(1,2-dicarboxyethyl)-AMP is bound at residue Q236. The active-site Proton donor/acceptor is the S287. N(6)-(1,2-dicarboxyethyl)-AMP contacts are provided by residues S288, 293-295, and 332-336; these read KRN and SAERC.

The protein belongs to the lyase 1 family. Adenylosuccinate lyase subfamily. In terms of assembly, homotetramer. Residues from neighboring subunits contribute catalytic and substrate-binding residues to each active site.

The enzyme catalyses N(6)-(1,2-dicarboxyethyl)-AMP = fumarate + AMP. It carries out the reaction (2S)-2-[5-amino-1-(5-phospho-beta-D-ribosyl)imidazole-4-carboxamido]succinate = 5-amino-1-(5-phospho-beta-D-ribosyl)imidazole-4-carboxamide + fumarate. It functions in the pathway purine metabolism; AMP biosynthesis via de novo pathway; AMP from IMP: step 2/2. It participates in purine metabolism; IMP biosynthesis via de novo pathway; 5-amino-1-(5-phospho-D-ribosyl)imidazole-4-carboxamide from 5-amino-1-(5-phospho-D-ribosyl)imidazole-4-carboxylate: step 2/2. Functionally, catalyzes two reactions in de novo purine nucleotide biosynthesis. Catalyzes the breakdown of 5-aminoimidazole- (N-succinylocarboxamide) ribotide (SAICAR or 2-[5-amino-1-(5-phospho-beta-D-ribosyl)imidazole-4-carboxamido]succinate) to 5-aminoimidazole-4-carboxamide ribotide (AICAR or 5-amino-1-(5-phospho-beta-D-ribosyl)imidazole-4-carboxamide) and fumarate, and of adenylosuccinate (ADS or N(6)-(1,2-dicarboxyethyl)-AMP) to adenosine monophosphate (AMP) and fumarate. The polypeptide is Adenylosuccinate lyase (purB) (Methanocaldococcus jannaschii (strain ATCC 43067 / DSM 2661 / JAL-1 / JCM 10045 / NBRC 100440) (Methanococcus jannaschii)).